The sequence spans 312 residues: Beta-ketoacyl-[acyl-carrier-protein] synthase III (312 aa).

Active-site residues include C112 and H237. The ACP-binding stretch occupies residues 238-242; sequence QANIR. Residue N267 is part of the active site.

The protein belongs to the thiolase-like superfamily. FabH family. Homodimer.

Its subcellular location is the cytoplasm. The catalysed reaction is malonyl-[ACP] + acetyl-CoA + H(+) = 3-oxobutanoyl-[ACP] + CO2 + CoA. Its pathway is lipid metabolism; fatty acid biosynthesis. In terms of biological role, catalyzes the condensation reaction of fatty acid synthesis by the addition to an acyl acceptor of two carbons from malonyl-ACP. Catalyzes the first condensation reaction which initiates fatty acid synthesis and may therefore play a role in governing the total rate of fatty acid production. Possesses both acetoacetyl-ACP synthase and acetyl transacylase activities. Its substrate specificity determines the biosynthesis of branched-chain and/or straight-chain of fatty acids. The chain is Beta-ketoacyl-[acyl-carrier-protein] synthase III from Oceanobacillus iheyensis (strain DSM 14371 / CIP 107618 / JCM 11309 / KCTC 3954 / HTE831).